We begin with the raw amino-acid sequence, 158 residues long: uncharacterized protein (158 aa).

This is an uncharacterized protein from Saccharomyces cerevisiae (strain ATCC 204508 / S288c) (Baker's yeast).